Here is a 180-residue protein sequence, read N- to C-terminus: NEDD8-conjugating enzyme ubc-12 (180 aa).

The 157-residue stretch at 24–180 (VRDKLLAQEL…RVREYISRYC (157 aa)) folds into the UBC core domain. Catalysis depends on cysteine 112, which acts as the Glycyl thioester intermediate.

It belongs to the ubiquitin-conjugating enzyme family. UBC12 subfamily.

It localises to the cytoplasm. The enzyme catalyses [E1 NEDD8-activating enzyme]-S-[NEDD8 protein]-yl-L-cysteine + [E2 NEDD8-conjugating enzyme]-L-cysteine = [E1 NEDD8-activating enzyme]-L-cysteine + [E2 NEDD8-conjugating enzyme]-S-[NEDD8-protein]-yl-L-cysteine.. It functions in the pathway protein modification; protein neddylation. Accepts the ubiquitin-like protein NEDD8 from the uba-3-ula-1 E1 complex and catalyzes its covalent attachment to other proteins. Plays a role in male tail tip morphogenesis. The sequence is that of NEDD8-conjugating enzyme ubc-12 from Caenorhabditis elegans.